The chain runs to 161 residues: DNA-directed RNA polymerase III subunit RPC9 (161 aa).

A disordered region spans residues 75–96; that stretch reads QEDEGEERESSGAKDAEKSGIS. Residues 82-96 are compositionally biased toward basic and acidic residues; it reads RESSGAKDAEKSGIS.

This sequence belongs to the eukaryotic RPC9 RNA polymerase subunit family. As to quaternary structure, component of the RNA polymerase III (Pol III) complex consisting of 17 subunits. Forms a Pol III subcomplex with RPC25/RPC8. Interacts with BURF1/TDS4.

The protein resides in the nucleus. DNA-dependent RNA polymerase catalyzes the transcription of DNA into RNA using the four ribonucleoside triphosphates as substrates. Specific peripheric component of RNA polymerase III which synthesizes small RNAs, such as 5S rRNA and tRNAs. The RPC25/RPC8-RPC17/RPC9 subcomplex may bind Pol III transcripts emerging from the adjacent exit pore during elongation. This Saccharomyces cerevisiae (strain ATCC 204508 / S288c) (Baker's yeast) protein is DNA-directed RNA polymerase III subunit RPC9 (RPC17).